Reading from the N-terminus, the 70-residue chain is uncharacterized protein (70 aa).

2 helical membrane-spanning segments follow: residues 13-33 and 39-59; these read YYAF…LLGF and QTYA…GLII.

It localises to the cell membrane. This is an uncharacterized protein from Escherichia coli O6:H1 (strain CFT073 / ATCC 700928 / UPEC).